A 178-amino-acid chain; its full sequence is MAFPTTEILSALIEPLAASHKFDLEGLKVTKAGPKSAVAIKVDSDSRPDLDQLEVFSQEIGELFDAAEQRGELNFGAGYTLEVSTPGVDNPLTLPRHWRRNRGRLVALDQDGKKRVARIGALNDAETHVVLIERNKKLLEVTTLELAHSPRAVVEIEFAKPAQDETALAESTFDEATA.

Belongs to the RimP family.

The protein resides in the cytoplasm. In terms of biological role, required for maturation of 30S ribosomal subunits. This chain is Ribosome maturation factor RimP, found in Corynebacterium glutamicum (strain ATCC 13032 / DSM 20300 / JCM 1318 / BCRC 11384 / CCUG 27702 / LMG 3730 / NBRC 12168 / NCIMB 10025 / NRRL B-2784 / 534).